The chain runs to 156 residues: Arginine repressor (156 aa).

The protein belongs to the ArgR family.

The protein localises to the cytoplasm. Its pathway is amino-acid biosynthesis; L-arginine biosynthesis [regulation]. Regulates arginine biosynthesis genes. This chain is Arginine repressor, found in Vibrio vulnificus (strain CMCP6).